The following is a 249-amino-acid chain: Exosome complex component Rrp41 (249 aa).

It belongs to the RNase PH family. Rrp41 subfamily. In terms of assembly, component of the archaeal exosome complex. Forms a hexameric ring-like arrangement composed of 3 Rrp41-Rrp42 heterodimers. The hexameric ring associates with a trimer of Rrp4 and/or Csl4 subunits.

Its subcellular location is the cytoplasm. Functionally, catalytic component of the exosome, which is a complex involved in RNA degradation. Has 3'-&gt;5' exoribonuclease activity. Can also synthesize heteromeric RNA-tails. This chain is Exosome complex component Rrp41, found in Thermococcus gammatolerans (strain DSM 15229 / JCM 11827 / EJ3).